The primary structure comprises 151 residues: Melatonin receptor type 1C (151 aa).

Over Cys1–Arg13 the chain is Cytoplasmic. A helical membrane pass occupies residues Asn14–Phe34. Residues Leu35 to Tyr58 lie on the Extracellular side of the membrane. The chain crosses the membrane as a helical span at residues Thr59–Leu79. Residues Arg80 to Met109 are Cytoplasmic-facing. Residues Phe110–Val130 form a helical membrane-spanning segment. The Extracellular segment spans residues Ala131–Glu143. The chain crosses the membrane as a helical span at residues Trp144–Phe151.

This sequence belongs to the G-protein coupled receptor 1 family.

The protein localises to the cell membrane. In terms of biological role, high affinity receptor for melatonin. The activity of this receptor is mediated by pertussis toxin sensitive G proteins that inhibits adenylate cyclase activity. This is Melatonin receptor type 1C (mtnr1c) from Danio rerio (Zebrafish).